A 266-amino-acid chain; its full sequence is Tryptophan synthase alpha chain (266 aa).

Residues glutamate 46 and aspartate 57 each act as proton acceptor in the active site.

It belongs to the TrpA family. Tetramer of two alpha and two beta chains.

The catalysed reaction is (1S,2R)-1-C-(indol-3-yl)glycerol 3-phosphate + L-serine = D-glyceraldehyde 3-phosphate + L-tryptophan + H2O. The protein operates within amino-acid biosynthesis; L-tryptophan biosynthesis; L-tryptophan from chorismate: step 5/5. Its function is as follows. The alpha subunit is responsible for the aldol cleavage of indoleglycerol phosphate to indole and glyceraldehyde 3-phosphate. This is Tryptophan synthase alpha chain from Lacticaseibacillus casei (Lactobacillus casei).